Reading from the N-terminus, the 283-residue chain is uncharacterized protein (283 aa).

Solcar repeat units lie at residues 14 to 95 (QPVW…LKHL), 102 to 185 (NDHA…SEAV), and 190 to 274 (GLAL…TLQG). Helical transmembrane passes span 20-40 (TLAG…FDVI), 70-90 (GNVV…VAFS), 105-125 (AVNF…SYPL), 157-177 (FFPG…CFFM), 184-204 (AVLS…IAGA), and 249-266 (GLSV…ITML).

The protein belongs to the mitochondrial carrier (TC 2.A.29) family.

The protein resides in the mitochondrion inner membrane. This is an uncharacterized protein from Schizosaccharomyces pombe (strain 972 / ATCC 24843) (Fission yeast).